Consider the following 547-residue polypeptide: Alpha-humulene/(-)-(E)-beta-caryophyllene synthase (547 aa).

Residues Arg-262, Asp-299, Asp-303, Arg-442, and Asp-445 each contribute to the (2E,6E)-farnesyl diphosphate site. Residues Asp-299 and Asp-303 each coordinate Mg(2+). Residues 299–303 (DDMYD) carry the DDXXD motif motif. Mg(2+) contacts are provided by Asp-445, Asp-446, Ser-449, and Glu-453.

This sequence belongs to the terpene synthase family. Tpsa subfamily. Monomer. It depends on Mg(2+) as a cofactor. Mn(2+) serves as cofactor. Expressed exclusively in flowers. Expressed in the flower stigmata and also detected in the mesocarp cell layers of the silique wall.

It localises to the cytoplasm. It carries out the reaction (2E,6E)-farnesyl diphosphate = (-)-(E)-beta-caryophyllene + diphosphate. The enzyme catalyses (2E,6E)-farnesyl diphosphate = alpha-copaene + diphosphate. It catalyses the reaction (2E,6E)-farnesyl diphosphate = alpha-humulene + diphosphate. The catalysed reaction is (2E,6E)-farnesyl diphosphate = (1S,2S,4R)-beta-elemene + diphosphate. It participates in secondary metabolite biosynthesis; terpenoid biosynthesis. In terms of biological role, involved in sesquiterpene (C15) biosynthesis. The major products are beta-caryophyllene and alpha-humulene. Does not convert geranyl diphosphate (GPP) to any monoterpenes. This chain is Alpha-humulene/(-)-(E)-beta-caryophyllene synthase, found in Arabidopsis thaliana (Mouse-ear cress).